A 394-amino-acid polypeptide reads, in one-letter code: Guanine nucleotide-binding protein G(s) subunit alpha (394 aa).

Residues 1–23 (MGCLGNSKTEDQRNEEKAQREAN) form a disordered region. A lipid anchor (N-palmitoyl glycine) is attached at Gly-2. Cys-3 is lipidated: S-palmitoyl cysteine. Positions 8-23 (KTEDQRNEEKAQREAN) are enriched in basic and acidic residues. In terms of domain architecture, G-alpha spans 39 to 394 (ATHRLLLLGA…RMHLRQYELL (356 aa)). Positions 42-55 (RLLLLGAGESGKST) are G1 motif. 47–55 (GAGESGKST) contributes to the GTP binding site. Residue Ser-54 participates in Mg(2+) binding. The interval 68 to 91 (FNGEGGEEDPQAARSNSDGEKATK) is disordered. Residues 196 to 204 (DLLRCRVLT) are G2 motif. GTP-binding positions include 197 to 204 (LLRCRVLT), 223 to 227 (DVGGQ), 292 to 295 (NKQD), and Ala-366. Thr-204 contacts Mg(2+). Residues 219 to 228 (FHMFDVGGQR) are G3 motif. The tract at residues 288-295 (ILFLNKQD) is G4 motif. Residues 364–369 (TCAVDT) are G5 motif.

This sequence belongs to the G-alpha family. G(s) subfamily. As to quaternary structure, heterotrimeric G proteins are composed of 3 units; alpha, beta and gamma. The alpha chain contains the guanine nucleotide binding site. Interacts with CRY1; the interaction may block GPCR-mediated regulation of cAMP concentrations. Interacts with ADCY6 and stimulates its adenylyl cyclase activity. Interacts with ADCY2 and ADCY5. Stimulates the ADCY5 adenylyl cyclase activity. Interaction with SASH1.

It localises to the cell membrane. Guanine nucleotide-binding proteins (G proteins) function as transducers in numerous signaling pathways controlled by G protein-coupled receptors (GPCRs). Signaling involves the activation of adenylyl cyclases, resulting in increased levels of the signaling molecule cAMP. GNAS functions downstream of several GPCRs, including beta-adrenergic receptors. Stimulates the Ras signaling pathway via RAPGEF2. The sequence is that of Guanine nucleotide-binding protein G(s) subunit alpha (GNAS) from Canis lupus familiaris (Dog).